The chain runs to 524 residues: Alkaline phosphatase, tissue-nonspecific isozyme (524 aa).

The signal sequence occupies residues 1–17 (MILPFLVLAIGTCLTNS). Residue Asp-60 participates in Mg(2+) binding. Zn(2+) is bound by residues Asp-60 and Ser-110. The active-site Phosphoserine intermediate is the Ser-110. Ser-110 bears the Phosphoserine mark. Cys-139 and Cys-201 are joined by a disulfide. Asn-140 carries N-linked (GlcNAc...) asparagine glycosylation. Residue Thr-173 participates in Mg(2+) binding. N-linked (GlcNAc...) asparagine glycosylation occurs at Asn-230. Glu-235 lines the Ca(2+) pocket. An N-linked (GlcNAc...) asparagine glycan is attached at Asn-271. Ca(2+)-binding residues include Phe-290 and Glu-291. N-linked (GlcNAc...) asparagine glycosylation occurs at Asn-303. Residue Asp-306 participates in Ca(2+) binding. A Mg(2+)-binding site is contributed by Glu-332. Positions 337, 341, 378, and 379 each coordinate Zn(2+). A glycan (N-linked (GlcNAc...) asparagine) is linked at Asn-430. Residue His-454 participates in Zn(2+) binding. The cysteines at positions 489 and 497 are disulfide-linked. Ser-501 carries GPI-anchor amidated serine lipidation. Positions 502–524 (SASSPSPGALLLPLALFPLRTLF) are cleaved as a propeptide — removed in mature form.

Belongs to the alkaline phosphatase family. As to quaternary structure, homodimer. It depends on Mg(2+) as a cofactor. Zn(2+) serves as cofactor. Requires Ca(2+) as cofactor. N-glycosylated.

It localises to the cell membrane. The protein resides in the extracellular vesicle membrane. The protein localises to the mitochondrion membrane. Its subcellular location is the mitochondrion intermembrane space. The catalysed reaction is a phosphate monoester + H2O = an alcohol + phosphate. The enzyme catalyses diphosphate + H2O = 2 phosphate + H(+). It carries out the reaction pyridoxal 5'-phosphate + H2O = pyridoxal + phosphate. It catalyses the reaction phosphoethanolamine + H2O = ethanolamine + phosphate. The catalysed reaction is N-phosphocreatine + H2O = creatine + phosphate. The enzyme catalyses ATP + H2O = ADP + phosphate + H(+). It carries out the reaction ADP + H2O = AMP + phosphate + H(+). It catalyses the reaction AMP + H2O = adenosine + phosphate. With respect to regulation, phosphatase activity is specifically inhibited by 5-((5-chloro-2-methoxyphenyl)sulfonamido)nicotinamide (SBI-425). Its function is as follows. Alkaline phosphatase that metabolizes various phosphate compounds and plays a key role in skeletal mineralization and adaptive thermogenesis. Has broad substrate specificity and can hydrolyze a considerable variety of compounds: however, only a few substrates, such as diphosphate (inorganic pyrophosphate; PPi), pyridoxal 5'-phosphate (PLP) and N-phosphocreatine are natural substrates. Plays an essential role in skeletal and dental mineralization via its ability to hydrolyze extracellular diphosphate, a potent mineralization inhibitor, to phosphate: it thereby promotes hydroxyapatite crystal formation and increases inorganic phosphate concentration. Acts in a non-redundant manner with PHOSPHO1 in skeletal mineralization: while PHOSPHO1 mediates the initiation of hydroxyapatite crystallization in the matrix vesicles (MVs), ALPL/TNAP catalyzes the spread of hydroxyapatite crystallization in the extracellular matrix. Also promotes dephosphorylation of osteopontin (SSP1), an inhibitor of hydroxyapatite crystallization in its phosphorylated state; it is however unclear whether ALPL/TNAP mediates SSP1 dephosphorylation via a direct or indirect manner. Catalyzes dephosphorylation of PLP to pyridoxal (PL), the transportable form of vitamin B6, in order to provide a sufficient amount of PLP in the brain, an essential cofactor for enzymes catalyzing the synthesis of diverse neurotransmitters. Additionally, also able to mediate ATP degradation in a stepwise manner to adenosine, thereby regulating the availability of ligands for purinergic receptors. Also capable of dephosphorylating microbial products, such as lipopolysaccharides (LPS) as well as other phosphorylated small-molecules, such as poly-inosine:cytosine (poly I:C). Acts as a key regulator of adaptive thermogenesis as part of the futile creatine cycle: localizes to the mitochondria of thermogenic fat cells and acts by mediating hydrolysis of N-phosphocreatine to initiate a futile cycle of creatine dephosphorylation and phosphorylation. During the futile creatine cycle, creatine and N-phosphocreatine are in a futile cycle, which dissipates the high energy charge of N-phosphocreatine as heat without performing any mechanical or chemical work. The chain is Alkaline phosphatase, tissue-nonspecific isozyme (Alpl) from Rattus norvegicus (Rat).